The primary structure comprises 668 residues: Threonine--tRNA ligase (668 aa).

The TGS domain maps to 1–61 (MSDLKIALTH…ADGDQVEPVA (61 aa)). A catalytic region spans residues 265–564 (DHRKLGRDLD…LVEHYAGAFP (300 aa)). 3 residues coordinate Zn(2+): cysteine 358, histidine 409, and histidine 541.

This sequence belongs to the class-II aminoacyl-tRNA synthetase family. In terms of assembly, homodimer. The cofactor is Zn(2+).

The protein resides in the cytoplasm. The catalysed reaction is tRNA(Thr) + L-threonine + ATP = L-threonyl-tRNA(Thr) + AMP + diphosphate + H(+). Functionally, catalyzes the attachment of threonine to tRNA(Thr) in a two-step reaction: L-threonine is first activated by ATP to form Thr-AMP and then transferred to the acceptor end of tRNA(Thr). Also edits incorrectly charged L-seryl-tRNA(Thr). The sequence is that of Threonine--tRNA ligase from Nocardioides sp. (strain ATCC BAA-499 / JS614).